We begin with the raw amino-acid sequence, 208 residues long: Protein-L-isoaspartate O-methyltransferase (208 aa).

The active site involves S59.

Belongs to the methyltransferase superfamily. L-isoaspartyl/D-aspartyl protein methyltransferase family.

The protein localises to the cytoplasm. It catalyses the reaction [protein]-L-isoaspartate + S-adenosyl-L-methionine = [protein]-L-isoaspartate alpha-methyl ester + S-adenosyl-L-homocysteine. In terms of biological role, catalyzes the methyl esterification of L-isoaspartyl residues in peptides and proteins that result from spontaneous decomposition of normal L-aspartyl and L-asparaginyl residues. It plays a role in the repair and/or degradation of damaged proteins. This chain is Protein-L-isoaspartate O-methyltransferase, found in Salmonella newport (strain SL254).